A 101-amino-acid polypeptide reads, in one-letter code: Phosphoribosyl-AMP cyclohydrolase (101 aa).

Aspartate 71 contributes to the Mg(2+) binding site. Cysteine 72 provides a ligand contact to Zn(2+). Mg(2+) contacts are provided by aspartate 73 and aspartate 75. 2 residues coordinate Zn(2+): cysteine 88 and cysteine 95.

It belongs to the PRA-CH family. In terms of assembly, homodimer. It depends on Mg(2+) as a cofactor. Zn(2+) is required as a cofactor.

It localises to the cytoplasm. It catalyses the reaction 1-(5-phospho-beta-D-ribosyl)-5'-AMP + H2O = 1-(5-phospho-beta-D-ribosyl)-5-[(5-phospho-beta-D-ribosylamino)methylideneamino]imidazole-4-carboxamide. It functions in the pathway amino-acid biosynthesis; L-histidine biosynthesis; L-histidine from 5-phospho-alpha-D-ribose 1-diphosphate: step 3/9. Catalyzes the hydrolysis of the adenine ring of phosphoribosyl-AMP. The protein is Phosphoribosyl-AMP cyclohydrolase of Bacillus cereus (strain Q1).